A 371-amino-acid polypeptide reads, in one-letter code: Serine/threonine-protein kinase 17B (371 aa).

A Protein kinase domain is found at 33 to 293 (TLTPKELGRG…AESCLSHSWL (261 aa)). Residues 39–47 (LGRGKFAVV) and Lys-62 each bind ATP. Catalysis depends on Asp-158, which acts as the Proton acceptor. The disordered stretch occupies residues 308–345 (SESSQTQDLSLRSSEDKTPKSCNGSCGDREDKENIPED). Residues 309–319 (ESSQTQDLSLR) show a composition bias toward polar residues.

It belongs to the protein kinase superfamily. CAMK Ser/Thr protein kinase family. DAP kinase subfamily. In terms of assembly, interacts with CHP1; the interaction induces CHP1 to translocate from the Golgi to the nucleus. In terms of processing, autophosphorylated. As to expression, highly expressed in thymus, spleen, and testis, lower levels present in the brain.

It is found in the nucleus. The protein localises to the cell membrane. The protein resides in the endoplasmic reticulum-Golgi intermediate compartment. It carries out the reaction L-seryl-[protein] + ATP = O-phospho-L-seryl-[protein] + ADP + H(+). The enzyme catalyses L-threonyl-[protein] + ATP = O-phospho-L-threonyl-[protein] + ADP + H(+). In terms of biological role, acts as a positive regulator of apoptosis. Phosphorylates myosin light chains. The protein is Serine/threonine-protein kinase 17B (Stk17b) of Rattus norvegicus (Rat).